The sequence spans 243 residues: tRNA (guanine-N(1)-)-methyltransferase (243 aa).

Residues glycine 110 and 130–135 (VGDYVM) contribute to the S-adenosyl-L-methionine site.

The protein belongs to the RNA methyltransferase TrmD family. In terms of assembly, homodimer.

The protein resides in the cytoplasm. It catalyses the reaction guanosine(37) in tRNA + S-adenosyl-L-methionine = N(1)-methylguanosine(37) in tRNA + S-adenosyl-L-homocysteine + H(+). In terms of biological role, specifically methylates guanosine-37 in various tRNAs. The chain is tRNA (guanine-N(1)-)-methyltransferase from Treponema denticola (strain ATCC 35405 / DSM 14222 / CIP 103919 / JCM 8153 / KCTC 15104).